Reading from the N-terminus, the 299-residue chain is DNA-binding transcriptional repressor CapW (299 aa).

The winged HTH domain stretch occupies residues 1–84; it reads MESSGSSKVR…EFKPITKRSE (84 aa). The segment at 85 to 196 is WYL domain; the sequence is ATRYLNELQR…IGRLDVLEHV (112 aa). Residues 120 to 200 form the WYL domain; it reads SRAIEADEVA…DVLEHVFSAK (81 aa). The probable ligand-binding region stretch occupies residues 145-189; it reads YQSMDAPEPQEWVLSPHALGFDGLRWHARAWCHARQVFRDFAIGR. The interval 197-299 is WCX domain; that stretch reads FSAKPVDPLL…DRDGLQHLRR (103 aa).

As to quaternary structure, homodimer.

Transcriptional regulator of a CBASS antivirus system. CBASS (cyclic oligonucleotide-based antiphage signaling system) provides immunity against bacteriophage. The CD-NTase protein synthesizes cyclic nucleotides in response to infection; these serve as specific second messenger signals. The signals activate a diverse range of effectors, leading to bacterial cell death and thus abortive phage infection. A type III CBASS system, part of a CapW-Cap6-Cap8-Cap7-CdnC-NucC locus. Binds specifically to palindromes that overlap the -10 site in the promoter of cap6, found beween found between the genes for divergently transcribed capW and cap6 (cognate DNA). Probably represses transcription bidirectionally from the promoter. Mutations that make it a constitutive repressor in E.coli do not change DNA-binding affinity. In Stenotrophomonas maltophilia (Pseudomonas maltophilia), this protein is DNA-binding transcriptional repressor CapW.